The primary structure comprises 699 residues: MNPIVKSFEYGQHTVTLETGVIARQADAAVLASMGDTTVLVTVVGKKEADAGRDFFPLTVNYQEKTYAAGKIPGGFFKREGRPSEDETLIARLIDRPIRPLFPNGFKNEVQVIITVVSVDPQIEPDIISMIGTSAALAISGIPFSGPLGAARVGYIDGEYVLNPSVAQLATSQLNLVVAGTAGAVLMVESEAQALPEEVMLGSVVYGHDQQQVVIKAIAEFKAEAGKPTWDWTAPTQDADLVAQIKELAEAGLGDAYKIQVKQDRYAQVSVVKAATKEALLASNPSIDLREVDNLLGSLEKKVVRGRIIRGEPRIDGREPDMIRALSVLAGVLPRTHGSALFTRGETQALVTCTLGTERDAQKIDSIMGERTNRFMLHYNFPPYSVGETGMVGSPKRREIGHGKLAWRGINAVMPSAAEFPYSVRVVSEITESNGSSSMASVCGTSLALMDAGVPIKTSVAGIAMGLVKEGDDFVVLSDILGDEDHLGDMDFKVAGTRDGITALQMDIKIEGITKEIMDIALQQAYGARVHILNVMDQAIGSHRDDISDHAPRITVIKINPEKIRDVIGKGGAVIRALTEETGTTIELEDDGTVKIASSNGEATKEAIRRIEEITSEVEVGRIYNGKVIRIVDFGAFVNILPGKDGLVHISQISDERVANVSDHLELNQEVAVKVMEVDRQGRVRLSIKEAQTKETAAE.

Mg(2+) is bound by residues Asp-485 and Asp-491. In terms of domain architecture, KH spans 552–611 (PRITVIKINPEKIRDVIGKGGAVIRALTEETGTTIELEDDGTVKIASSNGEATKEAIRRI). In terms of domain architecture, S1 motif spans 621-689 (GRIYNGKVIR…RQGRVRLSIK (69 aa)).

The protein belongs to the polyribonucleotide nucleotidyltransferase family. As to quaternary structure, component of the RNA degradosome, which is a multiprotein complex involved in RNA processing and mRNA degradation. Requires Mg(2+) as cofactor.

It is found in the cytoplasm. The enzyme catalyses RNA(n+1) + phosphate = RNA(n) + a ribonucleoside 5'-diphosphate. In terms of biological role, involved in mRNA degradation. Catalyzes the phosphorolysis of single-stranded polyribonucleotides processively in the 3'- to 5'-direction. This Shewanella baltica (strain OS223) protein is Polyribonucleotide nucleotidyltransferase.